A 169-amino-acid chain; its full sequence is MNYFDLFSLPVIFPIDQTRLSETYRELQKQYHPDKFVMQNDSERLRAMQKSTEINDAYQTLKNSCLRAQYLLLLAGLDIALEHKTLQDTAFLVQQMEWRETIAAFTEDDQDKMDEFALQLQQQVAGLESKIEVQLQNDELEATADSIRQLKFMLKLQIELVLIEEKLFD.

Residues 2–74 enclose the J domain; sequence NYFDLFSLPV…CLRAQYLLLL (73 aa).

The protein belongs to the HscB family. In terms of assembly, interacts with HscA and stimulates its ATPase activity.

Functionally, co-chaperone involved in the maturation of iron-sulfur cluster-containing proteins. Seems to help targeting proteins to be folded toward HscA. The protein is Co-chaperone protein HscB homolog of Psychromonas ingrahamii (strain DSM 17664 / CCUG 51855 / 37).